Consider the following 189-residue polypeptide: MASGSNWLSGVNVVLVMAYGSLVFVLLFIFVKRQIMRFAMKSRRGPHVPVGHNAPKDLKEEIDIRLSRVQDIKYEPQLLADDDARLLQLETQGNQSCYNYLYRMKALDAIRTSEIPFHSEGRHPRSLMGKNFRSYLLDLRNTSTPFKGVRKALIDTLLDGYETARYGTGVFGQNEYLRYQEALSELATA.

Residues valine 11–valine 31 traverse the membrane as a helical segment.

It localises to the membrane. The protein localises to the golgi apparatus. It is found in the mitochondrion. General regulator of phagocytosis. Required to uptake Gram negative bacterium by macrophages. This Pongo abelii (Sumatran orangutan) protein is Protein C1orf43 homolog.